We begin with the raw amino-acid sequence, 106 residues long: ATP-dependent Clp protease adapter protein ClpS (106 aa).

Belongs to the ClpS family. As to quaternary structure, binds to the N-terminal domain of the chaperone ClpA.

Functionally, involved in the modulation of the specificity of the ClpAP-mediated ATP-dependent protein degradation. In Erwinia tasmaniensis (strain DSM 17950 / CFBP 7177 / CIP 109463 / NCPPB 4357 / Et1/99), this protein is ATP-dependent Clp protease adapter protein ClpS.